The primary structure comprises 353 residues: Photosystem II D2 protein (353 aa).

Thr-2 carries the N-acetylthreonine modification. Position 2 is a phosphothreonine (Thr-2). The chain crosses the membrane as a helical span at residues 41-61 (CAYFALGGWFTGTTFVTSWYT). His-118 provides a ligand contact to chlorophyll a. Residues 125–141 (GFMLRQFELARSVQLRP) traverse the membrane as a helical segment. Residues Gln-130 and Asn-143 each coordinate pheophytin a. The helical transmembrane segment at 153-166 (VFVSVFLIYPLGQS) threads the bilayer. His-198 lines the chlorophyll a pocket. The helical transmembrane segment at 208–228 (AALLCAIHGATVENTLFEDGD) threads the bilayer. Residues His-215 and Phe-262 each coordinate a plastoquinone. His-215 serves as a coordination point for Fe cation. His-269 is a Fe cation binding site. A helical membrane pass occupies residues 279-295 (GLWMSALGVVGLALNLR).

The protein belongs to the reaction center PufL/M/PsbA/D family. In terms of assembly, PSII is composed of 1 copy each of membrane proteins PsbA, PsbB, PsbC, PsbD, PsbE, PsbF, PsbH, PsbI, PsbJ, PsbK, PsbL, PsbM, PsbT, PsbX, PsbY, PsbZ, Psb30/Ycf12, at least 3 peripheral proteins of the oxygen-evolving complex and a large number of cofactors. It forms dimeric complexes. The cofactor is The D1/D2 heterodimer binds P680, chlorophylls that are the primary electron donor of PSII, and subsequent electron acceptors. It shares a non-heme iron and each subunit binds pheophytin, quinone, additional chlorophylls, carotenoids and lipids. There is also a Cl(-1) ion associated with D1 and D2, which is required for oxygen evolution. The PSII complex binds additional chlorophylls, carotenoids and specific lipids..

It is found in the plastid. Its subcellular location is the chloroplast thylakoid membrane. It carries out the reaction 2 a plastoquinone + 4 hnu + 2 H2O = 2 a plastoquinol + O2. Its function is as follows. Photosystem II (PSII) is a light-driven water:plastoquinone oxidoreductase that uses light energy to abstract electrons from H(2)O, generating O(2) and a proton gradient subsequently used for ATP formation. It consists of a core antenna complex that captures photons, and an electron transfer chain that converts photonic excitation into a charge separation. The D1/D2 (PsbA/PsbD) reaction center heterodimer binds P680, the primary electron donor of PSII as well as several subsequent electron acceptors. D2 is needed for assembly of a stable PSII complex. The polypeptide is Photosystem II D2 protein (Pelargonium hortorum (Common geranium)).